Consider the following 229-residue polypeptide: Cytochrome c oxidase subunit 2 (229 aa).

Topologically, residues 1–14 (MPTPNQTNFQDAAS) are mitochondrial intermembrane. The helical transmembrane segment at 15-45 (PLMEELTHFHDHTLMIVFMISLLVLYILLSM) threads the bilayer. The Mitochondrial matrix segment spans residues 46–59 (LSTKLTHTNTANAQ). A helical transmembrane segment spans residues 60–87 (QAEMVWTILPAIILITIALPSLQILYMM). Over 88 to 229 (DEINKPHMTI…DLWLAMIDTL (142 aa)) the chain is Mitochondrial intermembrane. Positions 161, 196, 198, 200, 204, and 207 each coordinate Cu cation. Residue Glu-198 participates in Mg(2+) binding.

The protein belongs to the cytochrome c oxidase subunit 2 family. As to quaternary structure, component of the cytochrome c oxidase (complex IV, CIV), a multisubunit enzyme composed of 14 subunits. The complex is composed of a catalytic core of 3 subunits MT-CO1, MT-CO2 and MT-CO3, encoded in the mitochondrial DNA, and 11 supernumerary subunits COX4I, COX5A, COX5B, COX6A, COX6B, COX6C, COX7A, COX7B, COX7C, COX8 and NDUFA4, which are encoded in the nuclear genome. The complex exists as a monomer or a dimer and forms supercomplexes (SCs) in the inner mitochondrial membrane with NADH-ubiquinone oxidoreductase (complex I, CI) and ubiquinol-cytochrome c oxidoreductase (cytochrome b-c1 complex, complex III, CIII), resulting in different assemblies (supercomplex SCI(1)III(2)IV(1) and megacomplex MCI(2)III(2)IV(2)). Found in a complex with TMEM177, COA6, COX18, COX20, SCO1 and SCO2. Interacts with TMEM177 in a COX20-dependent manner. Interacts with COX20. Interacts with COX16. It depends on Cu cation as a cofactor.

The protein resides in the mitochondrion inner membrane. The catalysed reaction is 4 Fe(II)-[cytochrome c] + O2 + 8 H(+)(in) = 4 Fe(III)-[cytochrome c] + 2 H2O + 4 H(+)(out). Component of the cytochrome c oxidase, the last enzyme in the mitochondrial electron transport chain which drives oxidative phosphorylation. The respiratory chain contains 3 multisubunit complexes succinate dehydrogenase (complex II, CII), ubiquinol-cytochrome c oxidoreductase (cytochrome b-c1 complex, complex III, CIII) and cytochrome c oxidase (complex IV, CIV), that cooperate to transfer electrons derived from NADH and succinate to molecular oxygen, creating an electrochemical gradient over the inner membrane that drives transmembrane transport and the ATP synthase. Cytochrome c oxidase is the component of the respiratory chain that catalyzes the reduction of oxygen to water. Electrons originating from reduced cytochrome c in the intermembrane space (IMS) are transferred via the dinuclear copper A center (CU(A)) of subunit 2 and heme A of subunit 1 to the active site in subunit 1, a binuclear center (BNC) formed by heme A3 and copper B (CU(B)). The BNC reduces molecular oxygen to 2 water molecules using 4 electrons from cytochrome c in the IMS and 4 protons from the mitochondrial matrix. This Pelomedusa subrufa (African side-necked turtle) protein is Cytochrome c oxidase subunit 2 (MT-CO2).